The chain runs to 418 residues: Magnesium transporter MRS2-E (418 aa).

Positions 119–146 (DAAPSTNPAAADRGNGTEQGDQGSVPGL) are disordered. Residues 166–232 (VCLEHACKDL…RDELEHLLDD (67 aa)) are a coiled coil. Basic and acidic residues predominate over residues 258 to 268 (DSHKYASVDHD). Residues 258 to 287 (DSHKYASVDHDDDREEEDHDDETESGRESS) are disordered. Residues 269–280 (DDREEEDHDDET) show a composition bias toward acidic residues. Residues 344-364 (GVMLTTATVVVTAGIVVVSLF) traverse the membrane as a helical segment. The Required for magnesium transport activity signature appears at 365-367 (GMN). A helical membrane pass occupies residues 389-409 (FWETTFGTVAGCIAIYLLAIY).

This sequence belongs to the CorA metal ion transporter (MIT) (TC 1.A.35.5) family.

The protein localises to the membrane. In terms of biological role, magnesium transporter that may mediate the influx of magnesium. In Oryza sativa subsp. indica (Rice), this protein is Magnesium transporter MRS2-E (MRS2-E).